Consider the following 524-residue polypeptide: Tissue-resident T-cell transcription regulator protein ZNF683 (524 aa).

A compositionally biased stretch (basic and acidic residues) spans 130–142 (NKDKLGKQPERAG). Disordered regions lie at residues 130-166 (NKDK…NRKS) and 265-303 (QALP…LSSQ). C2H2-type zinc fingers lie at residues 322–344 (YECN…LRVH) and 350–372 (FQCA…HLVH). Residues 398-420 (REREVCHKRFSSSSNLKTHLRLH) form a C2H2-type 3; degenerate zinc finger. The C2H2-type 4 zinc finger occupies 426–448 (FQCSVCRSRFTQHIHLKLHHRLH).

This sequence belongs to the krueppel C2H2-type zinc-finger protein family. In terms of tissue distribution, expressed in terminally differentiated effector CD8(+) T-cells, but not in naive and central memory cells. Expressed in terminally differentiated natural killer (NK) cells and natural killer (NKT) T-cells (at protein level). Expressed strongly in effector-type CD8(+) T-cells and weakly in naive and memory CD8(+) T-cells. Expressed in terminally differentiated natural killer (NK) cells. Isoform 2 is strongly expressed in effector CD8(+) T and natural killer (NK) cells. Isoform 1 is expressed in effector CD8(+) T and natural killer (NK) cells. As to expression, (Microbial infection) Expressed in cytomegalovirus (CMV)-infected effector CD8(+) T-cells (at protein level).

It is found in the nucleus. Transcription factor that mediates a transcriptional program in various innate and adaptive immune tissue-resident lymphocyte T-cell types such as tissue-resident memory T (Trm), natural killer (trNK) and natural killer T (NKT) cells and negatively regulates gene expression of proteins that promote the egress of tissue-resident T-cell populations from non-lymphoid organs. Plays a role in the development, retention and long-term establishment of adaptive and innate tissue-resident lymphocyte T cell types in non-lymphoid organs, such as the skin and gut, but also in other nonbarrier tissues like liver and kidney, and therefore may provide immediate immunological protection against reactivating infections or viral reinfection. Also plays a role in the differentiation of both thymic and peripheral NKT cells. Negatively regulates the accumulation of interferon-gamma (IFN-gamma) in NKT cells at steady state or after antigenic stimulation. Positively regulates granzyme B production in NKT cells after innate stimulation. Associates with the transcriptional repressor PRDM1/BLIMP1 to chromatin at gene promoter regions. Its function is as follows. Lacks transcriptional repressor activity. Binds to DNA within promoter regions of the transcriptional repressor PRDM1/BLIMP1 target sites. Unable to regulate interferon-gamma (IFN-gamma) production in cytomegalovirus (CMV)-infected effector CD8(+) T-cells. Functionally, transcriptional repressor that binds to DNA within promoter regions of the transcriptional repressor PRDM1/BLIMP1 target sites. Regulates interferon-gamma (IFN-gamma) production in cytomegalovirus (CMV)-infected effector CD8(+) T cells. This Homo sapiens (Human) protein is Tissue-resident T-cell transcription regulator protein ZNF683.